The sequence spans 351 residues: dTDP-glucose 4,6-dehydratase (351 aa).

Residues 12 to 13, 32 to 35, 58 to 59, 80 to 84, and T99 each bind NAD(+); these read FI, DALT, DI, and FAAES. S84 contributes to the substrate binding site. T133 contributes to the substrate binding site. D134 functions as the Proton donor in the catalytic mechanism. Catalysis depends on proton acceptor residues E135 and Y158. Residue 158–162 participates in NAD(+) binding; the sequence is YSASK. N187 provides a ligand contact to substrate. An NAD(+)-binding site is contributed by N188. Substrate-binding positions include 197-198, 213-215, R222, N257, and 289-293; these read KL, PVY, and DRPGH.

Belongs to the NAD(P)-dependent epimerase/dehydratase family. dTDP-glucose dehydratase subfamily. As to quaternary structure, homodimer. Requires NAD(+) as cofactor.

It carries out the reaction dTDP-alpha-D-glucose = dTDP-4-dehydro-6-deoxy-alpha-D-glucose + H2O. The protein operates within carbohydrate biosynthesis; dTDP-L-rhamnose biosynthesis. Its pathway is bacterial outer membrane biogenesis; LPS O-antigen biosynthesis. In terms of biological role, catalyzes the dehydration of dTDP-D-glucose to form dTDP-6-deoxy-D-xylo-4-hexulose via a three-step process involving oxidation, dehydration and reduction. This chain is dTDP-glucose 4,6-dehydratase (rfbB), found in Xanthomonas campestris pv. campestris (strain ATCC 33913 / DSM 3586 / NCPPB 528 / LMG 568 / P 25).